The primary structure comprises 266 residues: UPF0294 protein YafD (266 aa).

The protein belongs to the UPF0294 family.

Its subcellular location is the cytoplasm. The sequence is that of UPF0294 protein YafD from Salmonella dublin (strain CT_02021853).